Reading from the N-terminus, the 62-residue chain is Conotoxin Tx5.1 (62 aa).

An N-terminal signal peptide occupies residues 1-22 (MCCLPVFVILLLLIASAPSVDA). A propeptide spanning residues 23–49 (QPKTKDDVPLAPLHDNAKSALQHLNQR) is cleaved from the precursor. The residue at position 60 (glutamine 60) is a Glutamine amide.

The protein belongs to the conotoxin T superfamily. Post-translationally, contains 2 disulfide bonds that can be either 'C1-C3, C2-C4' or 'C1-C4, C2-C3', since these disulfide connectivities have been observed for conotoxins with cysteine framework V (for examples, see AC P0DQQ7 and AC P81755). In terms of tissue distribution, expressed by the venom duct.

It is found in the secreted. This chain is Conotoxin Tx5.1, found in Conus textile (Cloth-of-gold cone).